The chain runs to 209 residues: CASP-like protein 2A2 (209 aa).

Residues 1-37 (MSKTAGVGRLGGARAADAAQQQQLAAGDAAVARAARP) are Cytoplasmic-facing. Residues 38–58 (IETLLRAAPLVLCVAAMTLML) form a helical membrane-spanning segment. Over 59 to 79 (RDQQSNEYGTVAYSDLGGFKY) the chain is Extracellular. Residues 80–100 (LVYANGLCAAYSLASAFYTAV) form a helical membrane-spanning segment. Residues 101-109 (PRPATVSRS) lie on the Cytoplasmic side of the membrane. Residues 110 to 130 (WVVFLLDQVFTYLILAAGAAA) traverse the membrane as a helical segment. Residues 131 to 161 (AELLYLAYNGDKEVTWSEACGVFGSFCRQAR) lie on the Extracellular side of the membrane. The helical transmembrane segment at 162 to 182 (ISVAITFGAVLCFILLSLLSS) threads the bilayer. Topologically, residues 183–209 (YRLFSAYEAPPPSALGSKGVEIAAYPR) are cytoplasmic.

It belongs to the Casparian strip membrane proteins (CASP) family. In terms of assembly, homodimer and heterodimers.

The protein localises to the cell membrane. This chain is CASP-like protein 2A2, found in Zea mays (Maize).